The chain runs to 428 residues: MAQILAPSIQCQTRITKTSPLATPISSKMWSSLVMKQNKKVARSAKFRVMAINSGTINRVEDLLNLDITPFTDSIIAEYIWIGGTGIDVRSKSRTISKPVEHPSELPKWNYDGSSTGQAPGEDSEVILYPQAIFKDPFRGGNNILVICDAYTPQGEPIPTNKRHKAAEIFSNPKVEAEIPWYGIEQEYTLLQTDVKWPLGWPVGGYPGPQGPYYCAAGADKSFGRDISDAHYKACLYAGINISGTNGEVMPGQWEYQVGPSVGIEAGDHIWASRYILERITEQAGVVLTLDPKPIEGDWNGAGCHTNYSTKSMREDGGFEVIKKAILNLSLRHKVHIEAYGEGNERRLTGKHETASINTFSWGVANRGCSIRVGRDTEKNGKGYLEDRRPASNMDPYVVTALLAESTLLWEPTLEAEALAAQKIALKV.

Residues 1–49 constitute a chloroplast transit peptide; it reads MAQILAPSIQCQTRITKTSPLATPISSKMWSSLVMKQNKKVARSAKFRV. Residues 75-155 form the GS beta-grasp domain; that stretch reads IIAEYIWIGG…VICDAYTPQG (81 aa). The region spanning 159 to 428 is the GS catalytic domain; sequence PTNKRHKAAE…LAAQKIALKV (270 aa).

This sequence belongs to the glutamine synthetase family. In terms of assembly, homooctamer.

It is found in the plastid. The protein localises to the chloroplast. It catalyses the reaction L-glutamate + NH4(+) + ATP = L-glutamine + ADP + phosphate + H(+). Functionally, the light-modulated chloroplast enzyme, encoded by a nuclear gene and expressed primarily in leaves, is responsible for the reassimilation of the ammonia generated by photorespiration. This chain is Glutamine synthetase leaf isozyme, chloroplastic (GS2), found in Medicago sativa (Alfalfa).